The primary structure comprises 475 residues: Sulfate adenylyltransferase subunit 1 (475 aa).

Residues 25–239 form the tr-type G domain; that stretch reads KSLLRFLTCG…EVLETVEIQR (215 aa). Residues 34–41 are G1; that stretch reads GSVDDGKS. Residue 34–41 participates in GTP binding; it reads GSVDDGKS. Residues 92–96 form a G2 region; it reads GITID. Residues 113–116 are G3; that stretch reads DTPG. Residues 113–117 and 168–171 contribute to the GTP site; these read DTPGH and NKMD. The interval 168–171 is G4; that stretch reads NKMD. The interval 206–208 is G5; it reads SAL.

This sequence belongs to the TRAFAC class translation factor GTPase superfamily. Classic translation factor GTPase family. CysN/NodQ subfamily. Heterodimer composed of CysD, the smaller subunit, and CysN.

It catalyses the reaction sulfate + ATP + H(+) = adenosine 5'-phosphosulfate + diphosphate. Its pathway is sulfur metabolism; hydrogen sulfide biosynthesis; sulfite from sulfate: step 1/3. With CysD forms the ATP sulfurylase (ATPS) that catalyzes the adenylation of sulfate producing adenosine 5'-phosphosulfate (APS) and diphosphate, the first enzymatic step in sulfur assimilation pathway. APS synthesis involves the formation of a high-energy phosphoric-sulfuric acid anhydride bond driven by GTP hydrolysis by CysN coupled to ATP hydrolysis by CysD. In Escherichia coli O139:H28 (strain E24377A / ETEC), this protein is Sulfate adenylyltransferase subunit 1.